A 256-amino-acid chain; its full sequence is uncharacterized protein (256 aa).

The signal sequence occupies residues 1–24 (MIKRVNKLVIGISLLFLVISITAG). C25 carries N-palmitoyl cysteine lipidation. The S-diacylglycerol cysteine moiety is linked to residue C25.

This sequence belongs to the staphylococcal tandem lipoprotein family.

Its subcellular location is the cell membrane. This is an uncharacterized protein from Staphylococcus aureus (strain bovine RF122 / ET3-1).